Reading from the N-terminus, the 87-residue chain is Type 3 secretion system needle filament protein (87 aa).

It belongs to the SctF family. As to quaternary structure, the core secretion machinery of the T3SS is composed of approximately 20 different proteins, including cytoplasmic components, a base, an export apparatus and a needle. This subunit polymerizes and forms the helical needle filament. Forms high-order oligomers in vitro. Forms a stable ternary complex with the YscE-YscG chaperone. Interacts directly with YscG but makes very little direct contact with YscE. Interacts with the needle adapter protein YscI/SctI.

Its subcellular location is the secreted. It localises to the cell surface. Its activity is regulated as follows. The secretion and/or polymerization may be controlled by the type III secretion system regulator YopR. Interaction with YscE-YscG chaperone prevents premature polymerization of YscF/SctF in the bacterial cytosol and is required for its stability and efficient secretion. Interaction with the needle adapter protein YscI/SctI is required for YscF/SctF secretion, needle assembly and Yop secretion. The N-terminus varies among bacterial species, not only in amino acid composition but also in the number of amino acids, and may function in manipulating the host response to the advantage of the bacteria. In Y.pestis, the N-terminus can function to decrease cytokine induction, perhaps contributing to a favorable immune environment leading to survival of Y.pestis within the eukaryotic host. Component of the type III secretion system (T3SS), also called injectisome, which is used to inject bacterial effector proteins into eukaryotic host cells. YscF/SctF forms the external needle filament that protrudes from the bacterial surface. Essential for the calcium-dependent regulation of T3SS and Yop secretion. Required to block Yop secretion in the presence of extracellular calcium. May be the extracellular T3SS component that senses extracellular calcium and/or participates in transmitting the calcium signal to the cytoplasmic compartment where the block in secretion is initiated. In terms of biological role, during infection, can induce innate immune responses. The needle proteins interact with host TLR2 or TLR4, and induce signaling by NF-kappa-B and/or AP-1. This activation is MyD88 dependent and results in increased expression of cytokines, including TNF-alpha, IL-6 and IL-8. Innate immune responses are modulated by the N-terminal region of YscF/SctF. In Yersinia pestis, this protein is Type 3 secretion system needle filament protein.